The following is an 829-amino-acid chain: Periplasmic nitrate reductase (829 aa).

A signal peptide (tat-type signal) is located at residues 1–31 (MKLSRRDFMKANAVAAAAAAAGLTIPTVARA). In terms of domain architecture, 4Fe-4S Mo/W bis-MGD-type spans 40–96 (ITWDKAPCRFCGTGCGVLVGTQNGRIVASQGDPDAPVNRGLNCIKGYFLPKIMYGKD). Residues cysteine 47, cysteine 50, cysteine 54, and cysteine 82 each contribute to the [4Fe-4S] cluster site. Residues lysine 84, glutamine 151, asparagine 176, cysteine 180, 213–220 (WGSNMAEM), 263–265 (QSD), methionine 373, glutamine 377, asparagine 483, 509–510 (SD), lysine 532, aspartate 559, and 719–728 (TGRVLEHWHT) each bind Mo-bis(molybdopterin guanine dinucleotide). Phenylalanine 795 is a substrate binding site. The Mo-bis(molybdopterin guanine dinucleotide) site is built by asparagine 803 and lysine 820.

It belongs to the prokaryotic molybdopterin-containing oxidoreductase family. NasA/NapA/NarB subfamily. In terms of assembly, component of the periplasmic nitrate reductase NapAB complex composed of NapA and NapB. [4Fe-4S] cluster serves as cofactor. Requires Mo-bis(molybdopterin guanine dinucleotide) as cofactor. In terms of processing, predicted to be exported by the Tat system. The position of the signal peptide cleavage has not been experimentally proven.

The protein resides in the periplasm. The enzyme catalyses 2 Fe(II)-[cytochrome] + nitrate + 2 H(+) = 2 Fe(III)-[cytochrome] + nitrite + H2O. In terms of biological role, catalytic subunit of the periplasmic nitrate reductase complex NapAB. Receives electrons from NapB and catalyzes the reduction of nitrate to nitrite. In Edwardsiella ictaluri (strain 93-146), this protein is Periplasmic nitrate reductase.